A 256-amino-acid polypeptide reads, in one-letter code: Pimeloyl-[acyl-carrier protein] methyl ester esterase (256 aa).

An AB hydrolase-1 domain is found at 15-242; that stretch reads HLVLLHGWGL…AAHAPFISHP (228 aa). Substrate contacts are provided by residues W22, 82-83, and 143-147; these read SL and FLALQ. S82 (nucleophile) is an active-site residue. Residues D207 and H235 contribute to the active site. H235 serves as a coordination point for substrate.

The protein belongs to the AB hydrolase superfamily. Carboxylesterase BioH family. Monomer.

Its subcellular location is the cytoplasm. The enzyme catalyses 6-carboxyhexanoyl-[ACP] methyl ester + H2O = 6-carboxyhexanoyl-[ACP] + methanol + H(+). The protein operates within cofactor biosynthesis; biotin biosynthesis. The physiological role of BioH is to remove the methyl group introduced by BioC when the pimeloyl moiety is complete. It allows to synthesize pimeloyl-ACP via the fatty acid synthetic pathway through the hydrolysis of the ester bonds of pimeloyl-ACP esters. This Salmonella dublin (strain CT_02021853) protein is Pimeloyl-[acyl-carrier protein] methyl ester esterase.